The following is a 499-amino-acid chain: Tektin-like protein 1 (499 aa).

S14 carries the post-translational modification Phosphoserine. Residues 201 to 225 (WEKKELKSMKRKMEKDMEISEDLLK) adopt a coiled-coil conformation. Residues 265-286 (VDITRPPTPRTQGLKTPPPDPI) form a disordered region. Positions 308 to 328 (KDILTEMAKNEVDIQNQQQEI) form a coiled coil. Position 372 is a phosphotyrosine (Y372).

As to quaternary structure, microtubule inner protein component of sperm flagellar doublet microtubules.

The protein localises to the cytoplasm. It localises to the cytoskeleton. It is found in the flagellum axoneme. Its function is as follows. Microtubule inner protein (MIP) part of the dynein-decorated doublet microtubules (DMTs) in sperm flagellar axoneme, which is required for motile flagellum beating. Forms an extensive interaction network cross-linking the lumen of axonemal doublet microtubules. The sequence is that of Tektin-like protein 1 from Mus musculus (Mouse).